We begin with the raw amino-acid sequence, 389 residues long: Transcription factor MYB97 (389 aa).

HTH myb-type domains follow at residues 16–68 and 69–123; these read GVVL…ANHL and RPNL…KRFQ. 2 consecutive DNA-binding regions (H-T-H motif) follow at residues 44–68 and 96–119; these read WNSV…ANHL and WARM…NTRL. Residues 131–159 are disordered; sequence PPEYSQNNHQQQMYPQQPSSPLPSQTPAS. Over residues 140–159 the composition is skewed to low complexity; the sequence is QQQMYPQQPSSPLPSQTPAS.

Accumulates in pollen grains and pollen tube. Mostly expressed in mature pollen grains, and, to a lower extent, in inflorescences and siliques.

It localises to the nucleus. In terms of biological role, transcription activator. Binds to 5'-CAACTGTC-3' and/or 5'-TAACAAA-3' motif in target gene promoter to promote their expression. Together with MYB101 and MYB120, functions as a male factor that controls pollen tube-synergid interaction in fertilization. Required for pollen tube growth arrest and sperm cell release in the female gametophyte, probably via the regulation of pollen tube-specific gene expression. The polypeptide is Transcription factor MYB97 (Arabidopsis thaliana (Mouse-ear cress)).